The following is a 527-amino-acid chain: uncharacterized protein (527 aa).

In terms of domain architecture, PE spans 1 to 93; that stretch reads MSYMIAVPDM…AGAYASAEAT (93 aa). Composition is skewed to gly residues over residues 264-286, 292-384, and 472-515; these read IHGH…GVQG, GAAG…AGNG, and NGGD…GGSR. Disordered regions lie at residues 264–384 and 472–527; these read IHGH…AGNG and NGGD…TPGQ.

The protein belongs to the mycobacterial PE family. PGRS subfamily.

This is an uncharacterized protein from Mycobacterium tuberculosis (strain CDC 1551 / Oshkosh).